The following is a 366-amino-acid chain: 3-dehydroquinate synthase (366 aa).

Residues 71 to 76 (DGEKYK), 105 to 109 (GVIGD), 129 to 130 (TT), Lys-142, Lys-151, and 169 to 172 (TLQT) each bind NAD(+). Positions 184, 247, and 264 each coordinate Zn(2+).

This sequence belongs to the sugar phosphate cyclases superfamily. Dehydroquinate synthase family. It depends on Co(2+) as a cofactor. Zn(2+) serves as cofactor. Requires NAD(+) as cofactor.

The protein localises to the cytoplasm. The catalysed reaction is 7-phospho-2-dehydro-3-deoxy-D-arabino-heptonate = 3-dehydroquinate + phosphate. The protein operates within metabolic intermediate biosynthesis; chorismate biosynthesis; chorismate from D-erythrose 4-phosphate and phosphoenolpyruvate: step 2/7. Catalyzes the conversion of 3-deoxy-D-arabino-heptulosonate 7-phosphate (DAHP) to dehydroquinate (DHQ). In Actinobacillus pleuropneumoniae serotype 5b (strain L20), this protein is 3-dehydroquinate synthase.